Here is a 269-residue protein sequence, read N- to C-terminus: Hydroxyethylthiazole kinase (269 aa).

Met-46 is a substrate binding site. Arg-121 and Thr-166 together coordinate ATP. Gly-193 is a binding site for substrate.

Belongs to the Thz kinase family. Mg(2+) serves as cofactor.

The catalysed reaction is 5-(2-hydroxyethyl)-4-methylthiazole + ATP = 4-methyl-5-(2-phosphooxyethyl)-thiazole + ADP + H(+). The protein operates within cofactor biosynthesis; thiamine diphosphate biosynthesis; 4-methyl-5-(2-phosphoethyl)-thiazole from 5-(2-hydroxyethyl)-4-methylthiazole: step 1/1. Catalyzes the phosphorylation of the hydroxyl group of 4-methyl-5-beta-hydroxyethylthiazole (THZ). In Limosilactobacillus reuteri (strain DSM 20016) (Lactobacillus reuteri), this protein is Hydroxyethylthiazole kinase.